The primary structure comprises 666 residues: tRNA 5-methylaminomethyl-2-thiouridine biosynthesis bifunctional protein MnmC (666 aa).

Residues 1–245 are tRNA (mnm(5)s(2)U34)-methyltransferase; that stretch reads MKQYAIQPAT…KREMLCGVME (245 aa). Residues 270–666 form an FAD-dependent cmnm(5)s(2)U34 oxidoreductase region; sequence IGGGIASALL…RKLLKGKAVK (397 aa).

The protein in the N-terminal section; belongs to the methyltransferase superfamily. tRNA (mnm(5)s(2)U34)-methyltransferase family. This sequence in the C-terminal section; belongs to the DAO family. The cofactor is FAD.

The protein localises to the cytoplasm. It carries out the reaction 5-aminomethyl-2-thiouridine(34) in tRNA + S-adenosyl-L-methionine = 5-methylaminomethyl-2-thiouridine(34) in tRNA + S-adenosyl-L-homocysteine + H(+). Catalyzes the last two steps in the biosynthesis of 5-methylaminomethyl-2-thiouridine (mnm(5)s(2)U) at the wobble position (U34) in tRNA. Catalyzes the FAD-dependent demodification of cmnm(5)s(2)U34 to nm(5)s(2)U34, followed by the transfer of a methyl group from S-adenosyl-L-methionine to nm(5)s(2)U34, to form mnm(5)s(2)U34. This is tRNA 5-methylaminomethyl-2-thiouridine biosynthesis bifunctional protein MnmC from Salmonella choleraesuis (strain SC-B67).